A 753-amino-acid chain; its full sequence is Catalase-peroxidase (753 aa).

Residues 90-238 (WHSAGTYRVT…LASSHMGLIY (149 aa)) constitute a cross-link (tryptophyl-tyrosyl-methioninium (Trp-Tyr) (with M-264)). Catalysis depends on H91, which acts as the Proton acceptor. Residues 196 to 220 (SEGQEGHEGHGVVQGDESKKQHTDI) form a disordered region. A cross-link (tryptophyl-tyrosyl-methioninium (Tyr-Met) (with W-90)) is located at residues 238 to 264 (YVNPEGPDGIPDPVASAKDIRVTFGRM). Heme b is bound at residue H279.

The protein belongs to the peroxidase family. Peroxidase/catalase subfamily. In terms of assembly, homodimer or homotetramer. It depends on heme b as a cofactor. In terms of processing, formation of the three residue Trp-Tyr-Met cross-link is important for the catalase, but not the peroxidase activity of the enzyme.

The protein localises to the cytoplasm. It carries out the reaction H2O2 + AH2 = A + 2 H2O. It catalyses the reaction 2 H2O2 = O2 + 2 H2O. Its activity is regulated as follows. Inhibited by KCN. Its function is as follows. Bifunctional enzyme with both catalase and broad-spectrum peroxidase activity. The sequence is that of Catalase-peroxidase from Neurospora crassa (strain ATCC 24698 / 74-OR23-1A / CBS 708.71 / DSM 1257 / FGSC 987).